The following is a 185-amino-acid chain: Ribosome-recycling factor (185 aa).

This sequence belongs to the RRF family.

It localises to the cytoplasm. In terms of biological role, responsible for the release of ribosomes from messenger RNA at the termination of protein biosynthesis. May increase the efficiency of translation by recycling ribosomes from one round of translation to another. This Novosphingobium aromaticivorans (strain ATCC 700278 / DSM 12444 / CCUG 56034 / CIP 105152 / NBRC 16084 / F199) protein is Ribosome-recycling factor.